Here is a 401-residue protein sequence, read N- to C-terminus: 1-deoxy-D-xylulose 5-phosphate reductoisomerase (401 aa).

Positions 11, 12, 13, 14, 38, 39, and 125 each coordinate NADPH. Position 126 (Lys126) interacts with 1-deoxy-D-xylulose 5-phosphate. An NADPH-binding site is contributed by Glu127. Asp151 contacts Mn(2+). 1-deoxy-D-xylulose 5-phosphate-binding residues include Ser152, Glu153, Ser179, and His202. Mn(2+) is bound at residue Glu153. Gly208 is an NADPH binding site. Positions 215, 220, 221, and 224 each coordinate 1-deoxy-D-xylulose 5-phosphate. Residue Glu224 participates in Mn(2+) binding.

It belongs to the DXR family. It depends on Mg(2+) as a cofactor. Mn(2+) is required as a cofactor.

It catalyses the reaction 2-C-methyl-D-erythritol 4-phosphate + NADP(+) = 1-deoxy-D-xylulose 5-phosphate + NADPH + H(+). It participates in isoprenoid biosynthesis; isopentenyl diphosphate biosynthesis via DXP pathway; isopentenyl diphosphate from 1-deoxy-D-xylulose 5-phosphate: step 1/6. Catalyzes the NADPH-dependent rearrangement and reduction of 1-deoxy-D-xylulose-5-phosphate (DXP) to 2-C-methyl-D-erythritol 4-phosphate (MEP). In Paraburkholderia phymatum (strain DSM 17167 / CIP 108236 / LMG 21445 / STM815) (Burkholderia phymatum), this protein is 1-deoxy-D-xylulose 5-phosphate reductoisomerase.